Here is a 292-residue protein sequence, read N- to C-terminus: ATP synthase gamma chain (292 aa).

Belongs to the ATPase gamma chain family. F-type ATPases have 2 components, CF(1) - the catalytic core - and CF(0) - the membrane proton channel. CF(1) has five subunits: alpha(3), beta(3), gamma(1), delta(1), epsilon(1). CF(0) has three main subunits: a, b and c.

Its subcellular location is the cell inner membrane. Functionally, produces ATP from ADP in the presence of a proton gradient across the membrane. The gamma chain is believed to be important in regulating ATPase activity and the flow of protons through the CF(0) complex. This is ATP synthase gamma chain from Hydrogenobaculum sp. (strain Y04AAS1).